A 148-amino-acid chain; its full sequence is Large ribosomal subunit protein bL9 (148 aa).

Belongs to the bacterial ribosomal protein bL9 family.

In terms of biological role, binds to the 23S rRNA. In Macrococcus caseolyticus (strain JCSC5402) (Macrococcoides caseolyticum), this protein is Large ribosomal subunit protein bL9.